The sequence spans 114 residues: Hemerythrin subunit 1 (114 aa).

7 residues coordinate Fe cation: histidine 26, histidine 55, glutamate 59, histidine 74, histidine 78, histidine 102, and aspartate 107.

This sequence belongs to the hemerythrin family.

Functionally, hemerythrin is a respiratory protein in blood cells of certain marine worms. The oxygen-binding site in each chain contains two iron atoms. This Golfingia vulgaris (Marine worm) protein is Hemerythrin subunit 1.